We begin with the raw amino-acid sequence, 95 residues long: Aspartyl/glutamyl-tRNA(Asn/Gln) amidotransferase subunit C (95 aa).

It belongs to the GatC family. As to quaternary structure, heterotrimer of A, B and C subunits.

The catalysed reaction is L-glutamyl-tRNA(Gln) + L-glutamine + ATP + H2O = L-glutaminyl-tRNA(Gln) + L-glutamate + ADP + phosphate + H(+). The enzyme catalyses L-aspartyl-tRNA(Asn) + L-glutamine + ATP + H2O = L-asparaginyl-tRNA(Asn) + L-glutamate + ADP + phosphate + 2 H(+). Its function is as follows. Allows the formation of correctly charged Asn-tRNA(Asn) or Gln-tRNA(Gln) through the transamidation of misacylated Asp-tRNA(Asn) or Glu-tRNA(Gln) in organisms which lack either or both of asparaginyl-tRNA or glutaminyl-tRNA synthetases. The reaction takes place in the presence of glutamine and ATP through an activated phospho-Asp-tRNA(Asn) or phospho-Glu-tRNA(Gln). This chain is Aspartyl/glutamyl-tRNA(Asn/Gln) amidotransferase subunit C, found in Dehalococcoides mccartyi (strain CBDB1).